The chain runs to 489 residues: 3-octaprenyl-4-hydroxybenzoate carboxy-lyase (489 aa).

Position 172 (N172) interacts with Mn(2+). Prenylated FMN-binding positions include 175 to 177 (IYR), 189 to 191 (RWL), and 194 to 195 (RG). E238 lines the Mn(2+) pocket. D287 (proton donor) is an active-site residue.

Belongs to the UbiD family. In terms of assembly, homohexamer. It depends on prenylated FMN as a cofactor. Mn(2+) serves as cofactor.

It is found in the cell membrane. The catalysed reaction is a 4-hydroxy-3-(all-trans-polyprenyl)benzoate + H(+) = a 2-(all-trans-polyprenyl)phenol + CO2. It participates in cofactor biosynthesis; ubiquinone biosynthesis. Functionally, catalyzes the decarboxylation of 3-octaprenyl-4-hydroxy benzoate to 2-octaprenylphenol, an intermediate step in ubiquinone biosynthesis. The sequence is that of 3-octaprenyl-4-hydroxybenzoate carboxy-lyase from Aeromonas salmonicida (strain A449).